The sequence spans 294 residues: MQARFHPIWVQLPSKLQDALLPYAGNDDFPAMLTAEQAKSIKKACGFDDNTLAVALLPLAAASSLTPISHFNVGAIARGESGNLYFGANMEFAGVPLQQTIHAEQCAITHAWLLGEKRLASVTVNYSPCGHCRQFMNELNSGTQLEIHLPKQASSTLDHYLPDSFGPNDLGITTLLMDPVNHGYKLETTDKLVLTALDAANQSYAPYSNSYSGTALLGKDGIIYPGRYAENAAFNPSLPPLQAALILMNISGGDCLAIERAVLVEGKHSDLSQRSATQSILAALGCSKFDYYTF.

2 consecutive CMP/dCMP-type deaminase domains span residues 48–168 (DDNT…FGPN) and 187–294 (ETTD…YYTF). Position 89-91 (89-91 (NME)) interacts with substrate. Residue H102 coordinates Zn(2+). E104 serves as the catalytic Proton donor. Zn(2+)-binding residues include C129 and C132.

Belongs to the cytidine and deoxycytidylate deaminase family. In terms of assembly, homodimer. Zn(2+) is required as a cofactor.

It carries out the reaction cytidine + H2O + H(+) = uridine + NH4(+). The enzyme catalyses 2'-deoxycytidine + H2O + H(+) = 2'-deoxyuridine + NH4(+). In terms of biological role, this enzyme scavenges exogenous and endogenous cytidine and 2'-deoxycytidine for UMP synthesis. The sequence is that of Cytidine deaminase from Photorhabdus laumondii subsp. laumondii (strain DSM 15139 / CIP 105565 / TT01) (Photorhabdus luminescens subsp. laumondii).